Consider the following 59-residue polypeptide: MGVAQHRQSKSRVRKRRAMWKLTAPNHIECPQCHKPKMPHHVCPSCGYYKAKEVISMGE.

The protein belongs to the bacterial ribosomal protein bL32 family.

This chain is Large ribosomal subunit protein bL32, found in Desulfitobacterium hafniense (strain Y51).